A 433-amino-acid chain; its full sequence is Mitochondrial inner membrane magnesium transporter MIT1 (433 aa).

Positions 257–298 (TNKLLRDMMKIKNNLQKLSNLLNALRTNIEKILNNENDMKNM) form a coiled coil. Residues 360–380 (FILLNAKISFSTLLFSISSVV) form a helical membrane-spanning segment. The Extracellular portion of the chain corresponds to 381–396 (TSLFGMNLKNFVEDSN). A helical membrane pass occupies residues 397 to 417 (YAFIIVSIFVSVWSIIGIYVT). Topologically, residues 418 to 433 (KNINTLLKFFDRYNFR) are mitochondrial matrix.

It belongs to the CorA metal ion transporter (MIT) (TC 1.A.35) family.

It localises to the mitochondrion inner membrane. Mitochondrial inner membrane magnesium transporter required for mitochondrial magnesium homeostasis. Involved in the development of the sporozoite in the mosquito vector midgut. This chain is Mitochondrial inner membrane magnesium transporter MIT1, found in Plasmodium berghei (strain Anka).